The primary structure comprises 210 residues: Late histone H1 (210 aa).

Disordered stretches follow at residues 1–21 (MSAA…HPPT) and 86–210 (SFKL…AAKK). An H15 domain is found at 17–91 (AHPPTSQMVV…GASGSFKLGK (75 aa)). The span at 104–113 (AAAKKAKLAA) shows a compositional bias: basic residues. Residues 114–123 (KKKEQKEKKA) show a composition bias toward basic and acidic residues. Residues 124–210 (AKTKARKEKL…KPAAKKAAKK (87 aa)) show a composition bias toward basic residues.

It belongs to the histone H1/H5 family.

It is found in the nucleus. Its subcellular location is the chromosome. In terms of biological role, histones H1 are necessary for the condensation of nucleosome chains into higher-order structures. The polypeptide is Late histone H1 (Lytechinus pictus (Painted sea urchin)).